The following is a 63-amino-acid chain: Alpha-conotoxin-like Sm1.3 (63 aa).

Positions Met1–Ser16 are cleaved as a signal peptide. Residues Ser17–Lys43 constitute a propeptide that is removed on maturation. 2 disulfides stabilise this stretch: Cys45/Cys51 and Cys46/Cys59. Met58 carries the post-translational modification Methionine sulfoxide; partial. Cys59 carries the cysteine amide; partial modification.

This sequence belongs to the conotoxin A superfamily. In terms of tissue distribution, expressed by the venom duct.

The protein resides in the secreted. Functionally, alpha-conotoxins act on postsynaptic membranes, they bind to the nicotinic acetylcholine receptors (nAChR) and thus inhibit them. The protein is Alpha-conotoxin-like Sm1.3 of Conus stercusmuscarum (Fly-specked cone).